The primary structure comprises 343 residues: Holliday junction branch migration complex subunit RuvB (343 aa).

The segment at 1–182 (MRDELLNTPT…FGISNRLDYY (182 aa)) is large ATPase domain (RuvB-L). ATP is bound by residues isoleucine 21, arginine 22, glycine 63, lysine 66, threonine 67, threonine 68, 129–131 (EDF), arginine 172, tyrosine 182, and arginine 219. Threonine 67 provides a ligand contact to Mg(2+). Positions 183 to 253 (SAELLQRIII…LARKTLAALE (71 aa)) are small ATPAse domain (RuvB-S). The interval 256-343 (EDGLDDMDKK…DGPLFQKGSS (88 aa)) is head domain (RuvB-H). DNA contacts are provided by arginine 311 and arginine 316.

It belongs to the RuvB family. Homohexamer. Forms an RuvA(8)-RuvB(12)-Holliday junction (HJ) complex. HJ DNA is sandwiched between 2 RuvA tetramers; dsDNA enters through RuvA and exits via RuvB. An RuvB hexamer assembles on each DNA strand where it exits the tetramer. Each RuvB hexamer is contacted by two RuvA subunits (via domain III) on 2 adjacent RuvB subunits; this complex drives branch migration. In the full resolvosome a probable DNA-RuvA(4)-RuvB(12)-RuvC(2) complex forms which resolves the HJ.

The protein localises to the cytoplasm. It carries out the reaction ATP + H2O = ADP + phosphate + H(+). Functionally, the RuvA-RuvB-RuvC complex processes Holliday junction (HJ) DNA during genetic recombination and DNA repair, while the RuvA-RuvB complex plays an important role in the rescue of blocked DNA replication forks via replication fork reversal (RFR). RuvA specifically binds to HJ cruciform DNA, conferring on it an open structure. The RuvB hexamer acts as an ATP-dependent pump, pulling dsDNA into and through the RuvAB complex. RuvB forms 2 homohexamers on either side of HJ DNA bound by 1 or 2 RuvA tetramers; 4 subunits per hexamer contact DNA at a time. Coordinated motions by a converter formed by DNA-disengaged RuvB subunits stimulates ATP hydrolysis and nucleotide exchange. Immobilization of the converter enables RuvB to convert the ATP-contained energy into a lever motion, pulling 2 nucleotides of DNA out of the RuvA tetramer per ATP hydrolyzed, thus driving DNA branch migration. The RuvB motors rotate together with the DNA substrate, which together with the progressing nucleotide cycle form the mechanistic basis for DNA recombination by continuous HJ branch migration. Branch migration allows RuvC to scan DNA until it finds its consensus sequence, where it cleaves and resolves cruciform DNA. The sequence is that of Holliday junction branch migration complex subunit RuvB from Prosthecochloris aestuarii (strain DSM 271 / SK 413).